A 173-amino-acid chain; its full sequence is Probable glutathione peroxidase 5 (173 aa).

Residue Gly2 is the site of N-myristoyl glycine attachment. Cys46 is an active-site residue.

It belongs to the glutathione peroxidase family. Ubiquitous.

It localises to the cell membrane. It catalyses the reaction 2 glutathione + H2O2 = glutathione disulfide + 2 H2O. May constitute a glutathione peroxidase-like protective system against oxidative stresses. The chain is Probable glutathione peroxidase 5 (GPX5) from Arabidopsis thaliana (Mouse-ear cress).